We begin with the raw amino-acid sequence, 434 residues long: Peptidase B (434 aa).

Mn(2+)-binding residues include Lys-198 and Asp-203. Lys-210 is an active-site residue. Mn(2+)-binding residues include Asp-221, Asp-280, and Glu-282. Residue Arg-284 is part of the active site.

The protein belongs to the peptidase M17 family. Homohexamer. Mn(2+) is required as a cofactor.

The protein localises to the cytoplasm. The enzyme catalyses Release of an N-terminal amino acid, Xaa, from a peptide or arylamide. Xaa is preferably Glu or Asp but may be other amino acids, including Leu, Met, His, Cys and Gln.. In terms of biological role, probably plays an important role in intracellular peptide degradation. The protein is Peptidase B of Pasteurella multocida (strain Pm70).